The primary structure comprises 341 residues: MKTRDFKFDLPQELIAQVPIEDRASSRLMVLDKETGNIEHKVFRDIIEYLNPGDCLVLNNTRVIPARLIGEKLETGGKIEFLLLKRTEEDTWQALVKPGKRAKVGTKFSFGNGKLIGEVVDLSDEGSRIIKFHYDGIFEEILDELGNMPLPPYITARLDEKERYQTVYSKHNGSAAAPTAGLHFTEELLNKIKEKGVDIAFVTLHVGLGTFRPVKVEDVLNHKMHSEYYMVSQEAADKINRAKENGKNVICVGTTSCRTIESACNEDGKMKETSGWTEIFIYPGYKFKVLDKLITNFHLPESTLIMLVSAICGKDNVLNAYNEAVKERYRFFSFGDAMIIK.

This sequence belongs to the QueA family. As to quaternary structure, monomer.

It is found in the cytoplasm. The catalysed reaction is 7-aminomethyl-7-carbaguanosine(34) in tRNA + S-adenosyl-L-methionine = epoxyqueuosine(34) in tRNA + adenine + L-methionine + 2 H(+). It participates in tRNA modification; tRNA-queuosine biosynthesis. Functionally, transfers and isomerizes the ribose moiety from AdoMet to the 7-aminomethyl group of 7-deazaguanine (preQ1-tRNA) to give epoxyqueuosine (oQ-tRNA). This chain is S-adenosylmethionine:tRNA ribosyltransferase-isomerase, found in Clostridioides difficile (strain 630) (Peptoclostridium difficile).